The following is a 527-amino-acid chain: EGF domain-specific O-linked N-acetylglucosamine transferase (527 aa).

The signal sequence occupies residues 1 to 17; the sequence is MLMLFVFGVLLHEVSLS. The Required for optimal activity signature appears at 295 to 297; sequence DYD. A glycan (N-linked (GlcNAc...) asparagine) is linked at Asn354. The Prevents secretion from ER signature appears at 524 to 527; that stretch reads HDEL.

This sequence belongs to the glycosyltransferase 61 family.

It localises to the endoplasmic reticulum lumen. The enzyme catalyses L-seryl-[protein] + UDP-N-acetyl-alpha-D-glucosamine = 3-O-(N-acetyl-beta-D-glucosaminyl)-L-seryl-[protein] + UDP + H(+). It carries out the reaction L-threonyl-[protein] + UDP-N-acetyl-alpha-D-glucosamine = 3-O-(N-acetyl-beta-D-glucosaminyl)-L-threonyl-[protein] + UDP + H(+). Catalyzes the transfer of a single N-acetylglucosamine from UDP-GlcNAc to a serine or threonine residue in extracellular proteins resulting in their modification with a beta-linked N-acetylglucosamine (O-GlcNAc). Specifically glycosylates the Thr residue located between the fifth and sixth conserved cysteines of folded EGF-like domains. This chain is EGF domain-specific O-linked N-acetylglucosamine transferase (EOGT), found in Pan troglodytes (Chimpanzee).